The following is a 448-amino-acid chain: tRNA-2-methylthio-N(6)-dimethylallyladenosine synthase (448 aa).

Residues 7-123 (RSFYIHTFGC…LPALIGDAEE (117 aa)) enclose the MTTase N-terminal domain. Positions 16, 52, 86, 159, 163, and 166 each coordinate [4Fe-4S] cluster. One can recognise a Radical SAM core domain in the interval 145–375 (REVGVGAFVP…IDLQLSISAE (231 aa)). Positions 378 to 441 (QEAVGSVVDV…SATLTGVNQG (64 aa)) constitute a TRAM domain.

It belongs to the methylthiotransferase family. MiaB subfamily. In terms of assembly, monomer. [4Fe-4S] cluster is required as a cofactor.

It localises to the cytoplasm. It carries out the reaction N(6)-dimethylallyladenosine(37) in tRNA + (sulfur carrier)-SH + AH2 + 2 S-adenosyl-L-methionine = 2-methylsulfanyl-N(6)-dimethylallyladenosine(37) in tRNA + (sulfur carrier)-H + 5'-deoxyadenosine + L-methionine + A + S-adenosyl-L-homocysteine + 2 H(+). Catalyzes the methylthiolation of N6-(dimethylallyl)adenosine (i(6)A), leading to the formation of 2-methylthio-N6-(dimethylallyl)adenosine (ms(2)i(6)A) at position 37 in tRNAs that read codons beginning with uridine. The polypeptide is tRNA-2-methylthio-N(6)-dimethylallyladenosine synthase (Chlorobium phaeovibrioides (strain DSM 265 / 1930) (Prosthecochloris vibrioformis (strain DSM 265))).